The sequence spans 488 residues: NADH-quinone oxidoreductase subunit N 2 (488 aa).

A run of 14 helical transmembrane segments spans residues 18 to 38, 45 to 65, 81 to 101, 110 to 130, 135 to 155, 169 to 189, 210 to 230, 242 to 262, 274 to 294, 308 to 328, 331 to 351, 375 to 395, 412 to 434, and 458 to 478; these read FLPE…ELFI, LVLN…LLIP, PLAV…LPFA, SFYG…FVLA, LIIL…LTAL, YLIL…FMYI, LVLG…AVPF, PTPV…IPLV, LVWT…GNLV, SSIA…VIGM, VIYF…VLAL, IAFA…TVGF, WLAF…LVVV, and FALT…WFLI.

Belongs to the complex I subunit 2 family. As to quaternary structure, NDH-1 is composed of 14 different subunits. Subunits NuoA, H, J, K, L, M, N constitute the membrane sector of the complex.

It localises to the cell inner membrane. The enzyme catalyses a quinone + NADH + 5 H(+)(in) = a quinol + NAD(+) + 4 H(+)(out). Its function is as follows. NDH-1 shuttles electrons from NADH, via FMN and iron-sulfur (Fe-S) centers, to quinones in the respiratory chain. The immediate electron acceptor for the enzyme in this species is believed to be ubiquinone. Couples the redox reaction to proton translocation (for every two electrons transferred, four hydrogen ions are translocated across the cytoplasmic membrane), and thus conserves the redox energy in a proton gradient. This Aquifex aeolicus (strain VF5) protein is NADH-quinone oxidoreductase subunit N 2.